The primary structure comprises 348 residues: Signal recognition particle receptor FtsY (348 aa).

Residues 143-150 (GVNGVGKT), 225-229 (DTSGR), and 289-292 (TKMD) contribute to the GTP site.

Belongs to the GTP-binding SRP family. FtsY subfamily. In terms of assembly, part of the signal recognition particle protein translocation system, which is composed of SRP and FtsY.

The protein resides in the cell membrane. It is found in the cytoplasm. It carries out the reaction GTP + H2O = GDP + phosphate + H(+). In terms of biological role, involved in targeting and insertion of nascent membrane proteins into the cytoplasmic membrane. Acts as a receptor for the complex formed by the signal recognition particle (SRP) and the ribosome-nascent chain (RNC). This Mycoplasma pneumoniae (strain ATCC 29342 / M129 / Subtype 1) (Mycoplasmoides pneumoniae) protein is Signal recognition particle receptor FtsY.